We begin with the raw amino-acid sequence, 689 residues long: Polyribonucleotide nucleotidyltransferase (689 aa).

Mg(2+) contacts are provided by D482 and D488. A KH domain is found at 549 to 608 (PRMITLTIPQNKIGELIGPGGKNIRKIQEDNNVKIDIEETGRVFISGVESDGVKSAKEYV). The S1 motif domain maps to 618-686 (GKIYKSRVTK…KQGRINLSIK (69 aa)).

The protein belongs to the polyribonucleotide nucleotidyltransferase family. Mg(2+) is required as a cofactor.

It localises to the cytoplasm. It catalyses the reaction RNA(n+1) + phosphate = RNA(n) + a ribonucleoside 5'-diphosphate. Functionally, involved in mRNA degradation. Catalyzes the phosphorolysis of single-stranded polyribonucleotides processively in the 3'- to 5'-direction. This is Polyribonucleotide nucleotidyltransferase from Endomicrobium trichonymphae.